The following is a 411-amino-acid chain: Serine hydroxymethyltransferase (411 aa).

Residues Leu119 and 123-125 contribute to the (6S)-5,6,7,8-tetrahydrofolate site; that span reads GHL. Lys228 bears the N6-(pyridoxal phosphate)lysine mark. 351-353 is a (6S)-5,6,7,8-tetrahydrofolate binding site; that stretch reads SPF.

It belongs to the SHMT family. As to quaternary structure, homodimer. The cofactor is pyridoxal 5'-phosphate.

Its subcellular location is the cytoplasm. It carries out the reaction (6R)-5,10-methylene-5,6,7,8-tetrahydrofolate + glycine + H2O = (6S)-5,6,7,8-tetrahydrofolate + L-serine. Its pathway is one-carbon metabolism; tetrahydrofolate interconversion. It functions in the pathway amino-acid biosynthesis; glycine biosynthesis; glycine from L-serine: step 1/1. Its function is as follows. Catalyzes the reversible interconversion of serine and glycine with tetrahydrofolate (THF) serving as the one-carbon carrier. This reaction serves as the major source of one-carbon groups required for the biosynthesis of purines, thymidylate, methionine, and other important biomolecules. Also exhibits THF-independent aldolase activity toward beta-hydroxyamino acids, producing glycine and aldehydes, via a retro-aldol mechanism. In Clostridium botulinum (strain Alaska E43 / Type E3), this protein is Serine hydroxymethyltransferase.